The chain runs to 403 residues: MVQISQIGAVLAVCSTLTVAAPTKGKARFNVPQVAVPMKAVHHPAVAYARALHKFGMKVPKAVSDAARGSVPTTPTKDDEQYVTQVTVGQGKLNLDLDTGSGDLWVFSTETPKDQSQGHNLYMPTSKSKRLDGYSWEITYGDMSSAGGDVFLDTVSIGNVTASSQAVESAKKVSDQFAKDKATDGLMGLSFSVLNTVQPKPQTTFFDTVLKQLEKPLFTCTLKHGQPGSYDFGYIDDSKHSGEIAYTNVDNSQGWWGFTAESYSIGGGSNSTHSFHGAQHHGARGSSIDGIADTGTTLMLLSDDVVQEYYKQVQGAKNDQQQGGWVFPCDAKLPDFTLSISGYNAVVPGKFMNYQAVGSVCFGGLQSVGSSGGVPNIFGDVFLKSQFVVWDTEGPRIGFAPQA.

An N-terminal signal peptide occupies residues Met1 to Ala20. Residues Ala21–Ala67 constitute a propeptide, activation peptide. The 319-residue stretch at Tyr82–Ala400 folds into the Peptidase A1 domain. The active site involves Asp98. Asn159 and Asn270 each carry an N-linked (GlcNAc...) asparagine glycan. Asp293 is an active-site residue. Cys329 and Cys361 form a disulfide bridge.

This sequence belongs to the peptidase A1 family.

It localises to the secreted. The catalysed reaction is Hydrolysis of proteins with broad specificity. Generally favors hydrophobic residues in P1 and P1', but also accepts Lys in P1, which leads to activation of trypsinogen. Does not clot milk.. Secreted aspartic endopeptidase that allows assimilation of proteinaceous substrates. Can catalyze hydrolysis of the major structural proteins of basement membrane, elastin, collagen, and laminin. Thought to play a significant role in virulence. Functionally, can catalyze hydrolysis of the major structural proteins of basement membrane, elastin, collagen, and laminin. Thought to play a significant role in virulence. This is Aspartic endopeptidase PEP1 (PEP1) from Trichophyton verrucosum (strain HKI 0517).